Here is a 108-residue protein sequence, read N- to C-terminus: uncharacterized protein (108 aa).

N-linked (GlcNAc...) asparagine glycosylation occurs at Asn-33.

Post-translationally, N-glycosylated.

This is an uncharacterized protein from Saccharomyces cerevisiae (strain ATCC 204508 / S288c) (Baker's yeast).